The chain runs to 277 residues: Shikimate dehydrogenase (NADP(+)) (277 aa).

Residues 15 to 17 (SLS) and Thr62 each bind shikimate. The active-site Proton acceptor is Lys66. Positions 87 and 102 each coordinate shikimate. NADP(+) contacts are provided by residues 127–131 (GAGGA), 151–156 (NRTVSK), and Ile219. Tyr221 is a binding site for shikimate. Residue Gly242 coordinates NADP(+).

The protein belongs to the shikimate dehydrogenase family. Homodimer.

The catalysed reaction is shikimate + NADP(+) = 3-dehydroshikimate + NADPH + H(+). It participates in metabolic intermediate biosynthesis; chorismate biosynthesis; chorismate from D-erythrose 4-phosphate and phosphoenolpyruvate: step 4/7. Involved in the biosynthesis of the chorismate, which leads to the biosynthesis of aromatic amino acids. Catalyzes the reversible NADPH linked reduction of 3-dehydroshikimate (DHSA) to yield shikimate (SA). The polypeptide is Shikimate dehydrogenase (NADP(+)) (Geobacillus sp. (strain WCH70)).